The following is a 221-amino-acid chain: Thymidylate kinase (221 aa).

12 to 19 (GIDGAGKS) provides a ligand contact to ATP.

This sequence belongs to the thymidylate kinase family.

It carries out the reaction dTMP + ATP = dTDP + ADP. In terms of biological role, phosphorylation of dTMP to form dTDP in both de novo and salvage pathways of dTTP synthesis. This Paracidovorax citrulli (strain AAC00-1) (Acidovorax citrulli) protein is Thymidylate kinase.